The chain runs to 64 residues: Large ribosomal subunit protein bL35 (64 aa).

The interval 27-47 is disordered; the sequence is MNGSHNLEKKNRKRSRRLHQA. The span at 36–45 shows a compositional bias: basic residues; sequence KNRKRSRRLH.

This sequence belongs to the bacterial ribosomal protein bL35 family.

This Chlorobium phaeobacteroides (strain DSM 266 / SMG 266 / 2430) protein is Large ribosomal subunit protein bL35.